A 135-amino-acid chain; its full sequence is Small ribosomal subunit protein uS9 (135 aa).

A compositionally biased stretch (basic and acidic residues) spans 102 to 115; that stretch reads PLKTEGHLSRDPRA. A disordered region spans residues 102-135; sequence PLKTEGHLSRDPRAKERRKYGLKKARKAPQFSKR. A compositionally biased stretch (basic residues) spans 116–135; sequence KERRKYGLKKARKAPQFSKR.

Belongs to the universal ribosomal protein uS9 family.

This is Small ribosomal subunit protein uS9 from Synechococcus sp. (strain CC9311).